The primary structure comprises 400 residues: Pyruvate dehydrogenase E1 component subunit beta-4, chloroplastic (400 aa).

A disordered region spans residues 1 to 34; that stretch reads MAAASSLHAAPRVGSSSSFSSSSSAGRRSASAAR. The N-terminal 57 residues, 1–57, are a transit peptide targeting the chloroplast; it reads MAAASSLHAAPRVGSSSSFSSSSSAGRRSASAARSVRVAAAAGSCAARRAGGRMVAR. The span at 9–34 shows a compositional bias: low complexity; the sequence is AAPRVGSSSSFSSSSSAGRRSASAAR. Glu-136 provides a ligand contact to thiamine diphosphate. Positions 189, 237, 238, and 242 each coordinate K(+).

As to quaternary structure, tetramer of 2 alpha and 2 beta subunits. Requires thiamine diphosphate as cofactor.

The protein resides in the plastid. It localises to the chloroplast. The enzyme catalyses N(6)-[(R)-lipoyl]-L-lysyl-[protein] + pyruvate + H(+) = N(6)-[(R)-S(8)-acetyldihydrolipoyl]-L-lysyl-[protein] + CO2. Functionally, the pyruvate dehydrogenase complex catalyzes the overall conversion of pyruvate to acetyl-CoA and CO(2). It contains multiple copies of three enzymatic components: pyruvate dehydrogenase (E1), dihydrolipoamide acetyltransferase (E2) and lipoamide dehydrogenase (E3). This Oryza sativa subsp. japonica (Rice) protein is Pyruvate dehydrogenase E1 component subunit beta-4, chloroplastic.